A 104-amino-acid chain; its full sequence is Defensin-2 (104 aa).

Residues 1–19 (MKFFVLFAILIAIVHASCA) form the signal peptide. 3 disulfide bridges follow: Cys64-Cys95, Cys81-Cys100, and Cys85-Cys102.

The protein belongs to the invertebrate defensin family. Type 1 subfamily. Low expression in head and thorax.

It localises to the secreted. Functionally, antibacterial peptide mostly active against Gram-positive bacteria. The protein is Defensin-2 of Apis mellifera (Honeybee).